A 426-amino-acid polypeptide reads, in one-letter code: Dihydroorotase (426 aa).

2 residues coordinate Zn(2+): histidine 61 and histidine 63. Substrate contacts are provided by residues 63–65 and asparagine 95; that span reads HCR. Residues glutamate 146, histidine 180, histidine 229, and aspartate 297 each coordinate Zn(2+). Residue aspartate 297 is part of the active site. Histidine 301 contributes to the substrate binding site.

This sequence belongs to the metallo-dependent hydrolases superfamily. DHOase family. Class I DHOase subfamily. It depends on Zn(2+) as a cofactor.

It catalyses the reaction (S)-dihydroorotate + H2O = N-carbamoyl-L-aspartate + H(+). It participates in pyrimidine metabolism; UMP biosynthesis via de novo pathway; (S)-dihydroorotate from bicarbonate: step 3/3. Catalyzes the reversible cyclization of carbamoyl aspartate to dihydroorotate. The sequence is that of Dihydroorotase from Methanopyrus kandleri (strain AV19 / DSM 6324 / JCM 9639 / NBRC 100938).